A 752-amino-acid chain; its full sequence is Endo-1,4-beta-xylanase 3 (752 aa).

The disordered stretch occupies residues 1 to 22 (MEKNTNTNHTSDDNNDKNHTNE). The segment covering 10 to 22 (TSDDNNDKNHTNE) has biased composition (basic and acidic residues). CBM-cenC domains are found at residues 26 to 163 (KIIL…EGPP) and 197 to 344 (NIVE…VQGP). The GH10 domain occupies 397-692 (FPYIVKVKQT…NEAGKRFLEV (296 aa)). Glu526 acts as the Proton donor in catalysis. Residue Glu627 is the Nucleophile of the active site.

This sequence belongs to the glycosyl hydrolase 10 (cellulase F) family. In terms of tissue distribution, confined to immature xylems.

It carries out the reaction Endohydrolysis of (1-&gt;4)-beta-D-xylosidic linkages in xylans.. It functions in the pathway glycan degradation; xylan degradation. Functionally, binds to and hydrolyzes insoluble and soluble xylan substrates. The sequence is that of Endo-1,4-beta-xylanase 3 from Arabidopsis thaliana (Mouse-ear cress).